A 363-amino-acid polypeptide reads, in one-letter code: Fructose-1,6-bisphosphate aldolase/phosphatase (363 aa).

Residue aspartate 11 is the Proton acceptor; for FBP phosphatase activity of the active site. The Mg(2+) site is built by aspartate 11, histidine 18, aspartate 51, and aspartate 52. A beta-D-fructose 1,6-bisphosphate-binding site is contributed by histidine 18. Histidine 18 provides a ligand contact to dihydroxyacetone phosphate. Tyrosine 89 is a beta-D-fructose 1,6-bisphosphate binding site. A Mg(2+)-binding site is contributed by glutamine 93. Residue 102–103 (GN) coordinates beta-D-fructose 1,6-bisphosphate. Mg(2+) is bound at residue aspartate 130. Lysine 131 is a beta-D-fructose 1,6-bisphosphate binding site. Residue lysine 131 participates in dihydroxyacetone phosphate binding. Tyrosine 230 (proton donor/acceptor; for FBP aldolase activity) is an active-site residue. Positions 233, 234, and 235 each coordinate Mg(2+). Residue lysine 233 is the Schiff-base intermediate with DHAP; for FBP aldolase activity of the active site. Residues 243–244 (QK), arginine 267, and tyrosine 348 each bind beta-D-fructose 1,6-bisphosphate. Arginine 267 is a binding site for dihydroxyacetone phosphate.

It belongs to the FBP aldolase/phosphatase family. As to quaternary structure, homooctamer; dimer of tetramers. Mg(2+) is required as a cofactor.

It carries out the reaction beta-D-fructose 1,6-bisphosphate + H2O = beta-D-fructose 6-phosphate + phosphate. The catalysed reaction is beta-D-fructose 1,6-bisphosphate = D-glyceraldehyde 3-phosphate + dihydroxyacetone phosphate. The protein operates within carbohydrate biosynthesis; gluconeogenesis. Functionally, catalyzes two subsequent steps in gluconeogenesis: the aldol condensation of dihydroxyacetone phosphate (DHAP) and glyceraldehyde-3-phosphate (GA3P) to fructose-1,6-bisphosphate (FBP), and the dephosphorylation of FBP to fructose-6-phosphate (F6P). The polypeptide is Fructose-1,6-bisphosphate aldolase/phosphatase (Thermus thermophilus (strain ATCC BAA-163 / DSM 7039 / HB27)).